An 804-amino-acid chain; its full sequence is Tegument protein UL47 homolog (804 aa).

Over residues 1-15 the composition is skewed to basic residues; the sequence is MQSGHYNRRQSRRQR. Disordered regions lie at residues 1–42 and 58–206; these read MQSG…THPP and LNSE…DYFS. A Nuclear localization signal motif is present at residues 11 to 31; that stretch reads SRRQRISSNTTDSPRHTHGTR. Polar residues predominate over residues 32-42; the sequence is YRSTNWYTHPP. The span at 62–72 shows a compositional bias: acidic residues; the sequence is MDQDSSSDASD. The span at 82–93 shows a compositional bias: polar residues; that stretch reads STYNGSEQNTST. Positions 94-109 are enriched in basic and acidic residues; that stretch reads SRHENRIFKLTEREAN. 3 tandem repeats follow at residues 117 to 132, 133 to 148, and 149 to 164. The tract at residues 117 to 203 is 6 X 16 AA approximate tandem repeats; that stretch reads DAIDDEGEAE…IDDEGEAEED (87 aa). Residues 118–204 show a composition bias toward acidic residues; that stretch reads AIDDEGEAEE…DDEGEAEEDY (87 aa). Residues 170 to 180 form a 1-4; truncated repeat; sequence DAIDDEGEAEE. The 1-5; truncated repeat unit spans residues 181-191; it reads DAIDDEGEAEE. The 1-6; truncated repeat unit spans residues 192 to 203; sequence DAIDDEGEAEED. The Nuclear export signal signature appears at 770–792; the sequence is QPIPSVDLAENLMQYRNEILGLD.

This sequence belongs to the alphaherpesvirinae HHV-1 UL47 family. Interacts with US3 kinase. Interacts with ORF24 and ORF27; these interactions seem important for efficient virion nuclear egress. Interacts with ORF17/VHS. In terms of processing, phosphorylated by US3. This phosphorylation is required for proper nuclear localization.

It is found in the virion tegument. The protein localises to the host nucleus. The protein resides in the host cytoplasm. Tegument protein that can bind to various RNA transcripts. Plays a role in the attenuation of selective viral and cellular mRNA degradation by modulating the activity of host shutoff RNase ORF17/VHS. Also plays a role in the primary envelopment of virions in the perinuclear space, probably by interacting with two nuclear egress proteins ORF24 and ORF27. This is Tegument protein UL47 homolog from Varicella-zoster virus (strain Oka vaccine) (HHV-3).